We begin with the raw amino-acid sequence, 205 residues long: Molybdenum cofactor guanylyltransferase (205 aa).

Residues 14–16, Lys27, Asp77, and Asp107 contribute to the GTP site; that span reads LAG. Asp107 serves as a coordination point for Mg(2+).

It belongs to the MobA family. Monomer. Mg(2+) is required as a cofactor.

The protein localises to the cytoplasm. It catalyses the reaction Mo-molybdopterin + GTP + H(+) = Mo-molybdopterin guanine dinucleotide + diphosphate. In terms of biological role, transfers a GMP moiety from GTP to Mo-molybdopterin (Mo-MPT) cofactor (Moco or molybdenum cofactor) to form Mo-molybdopterin guanine dinucleotide (Mo-MGD) cofactor. The sequence is that of Molybdenum cofactor guanylyltransferase from Burkholderia ambifaria (strain ATCC BAA-244 / DSM 16087 / CCUG 44356 / LMG 19182 / AMMD) (Burkholderia cepacia (strain AMMD)).